A 64-amino-acid chain; its full sequence is Conotoxin mr5.1a (64 aa).

An N-terminal signal peptide occupies residues 1–19 (MRCVPVFVILLLLIASAPS). Residues 20–48 (VDARLKTKDDMPLPSSHANIKRTLQIHRN) constitute a propeptide that is removed on maturation. A 4-carboxyglutamate modification is found at E60.

Belongs to the conotoxin T superfamily. Contains 2 disulfide bonds that can be either 'C1-C3, C2-C4' or 'C1-C4, C2-C3', since these disulfide connectivities have been observed for conotoxins with cysteine framework V (for examples, see AC P0DQQ7 and AC P81755). Expressed by the venom duct.

Its subcellular location is the secreted. The chain is Conotoxin mr5.1a from Conus marmoreus (Marble cone).